Consider the following 226-residue polypeptide: Cytidylate kinase (226 aa).

ATP is bound at residue 12–20; sequence GPSGAGKGT.

Belongs to the cytidylate kinase family. Type 1 subfamily.

It localises to the cytoplasm. It catalyses the reaction CMP + ATP = CDP + ADP. The enzyme catalyses dCMP + ATP = dCDP + ADP. The polypeptide is Cytidylate kinase (Vibrio vulnificus (strain CMCP6)).